We begin with the raw amino-acid sequence, 266 residues long: Glutamate racemase (266 aa).

Substrate contacts are provided by residues 9-10 and 41-42; these read DS and YG. The Proton donor/acceptor role is filled by Cys-72. 73–74 lines the substrate pocket; the sequence is NT. Cys-183 acts as the Proton donor/acceptor in catalysis. 184-185 is a substrate binding site; sequence TH.

It belongs to the aspartate/glutamate racemases family.

It carries out the reaction L-glutamate = D-glutamate. The protein operates within cell wall biogenesis; peptidoglycan biosynthesis. In terms of biological role, provides the (R)-glutamate required for cell wall biosynthesis. The chain is Glutamate racemase from Listeria innocua serovar 6a (strain ATCC BAA-680 / CLIP 11262).